Here is a 186-residue protein sequence, read N- to C-terminus: Large ribosomal subunit protein bL9 (186 aa).

Positions 153–186 (ELRQVKSQSQKSQQQEAKQNEVGEATDSDKADQK) are disordered. A compositionally biased stretch (low complexity) spans 157-169 (VKSQSQKSQQQEA).

The protein belongs to the bacterial ribosomal protein bL9 family.

Its function is as follows. Binds to the 23S rRNA. The polypeptide is Large ribosomal subunit protein bL9 (Wolbachia sp. subsp. Brugia malayi (strain TRS)).